The following is a 119-amino-acid chain: Holo-[acyl-carrier-protein] synthase (119 aa).

Mg(2+) is bound by residues Asp7 and Glu53.

The protein belongs to the P-Pant transferase superfamily. AcpS family. Mg(2+) is required as a cofactor.

The protein localises to the cytoplasm. It catalyses the reaction apo-[ACP] + CoA = holo-[ACP] + adenosine 3',5'-bisphosphate + H(+). Its function is as follows. Transfers the 4'-phosphopantetheine moiety from coenzyme A to a Ser of acyl-carrier-protein. This chain is Holo-[acyl-carrier-protein] synthase, found in Dehalococcoides mccartyi (strain CBDB1).